A 577-amino-acid chain; its full sequence is MKYSKIPVARSVVALCVAKDIKHVVISPGSRNAPLTIGFTHHDEITPYSIVDERCAAFFALGLAQELKKPVALVCTSGSALLNYYPAIAEAYYSDIPLVIISADRPIERIDIGDGQTIRQKNVFENHILYSANLYSELVLENQSQDPKLQQKQFEAQKHNEREVNLALNKAIEEKGPVHINVPFYEPLYDTVENINVNPLQIFPEIKERHYSEKQLQNYANEWNRAERKMVIVGVAQPNAVEQKFLEGLATDPSVIVLTETTSNLHQEQFFTRIDTLIGPIEKDENREELFNRLQPDILLTFGGMIVSKKIKSFLRNYSPQHHWHIDSKKAYNTFFCLNKHFETDVNSFFSEFFPLTKRTESDYGSFWKDIKGKRQHRHEDYMAEIPYSDLKAMQEIYQKIPKNSVLHFGNSSTIRYAQLFEWDKSLKIYCNRGTSGIDGSVSTAVGASVSSEEPVTIITGDLSFFYDSNALWNNYIPSNFRIIILNNNGGGIFRILPGNKNSENFEKYFETTHNLKAKPICDLYNFDYEKANSEEEIQKVMKDFYSESGKPKLLEIFTPRKINDEVLLEYFNFMKS.

Belongs to the TPP enzyme family. MenD subfamily. Homodimer. Mg(2+) serves as cofactor. Requires Mn(2+) as cofactor. The cofactor is thiamine diphosphate.

It carries out the reaction isochorismate + 2-oxoglutarate + H(+) = 5-enolpyruvoyl-6-hydroxy-2-succinyl-cyclohex-3-ene-1-carboxylate + CO2. It functions in the pathway quinol/quinone metabolism; 1,4-dihydroxy-2-naphthoate biosynthesis; 1,4-dihydroxy-2-naphthoate from chorismate: step 2/7. The protein operates within quinol/quinone metabolism; menaquinone biosynthesis. In terms of biological role, catalyzes the thiamine diphosphate-dependent decarboxylation of 2-oxoglutarate and the subsequent addition of the resulting succinic semialdehyde-thiamine pyrophosphate anion to isochorismate to yield 2-succinyl-5-enolpyruvyl-6-hydroxy-3-cyclohexene-1-carboxylate (SEPHCHC). The polypeptide is 2-succinyl-5-enolpyruvyl-6-hydroxy-3-cyclohexene-1-carboxylate synthase (Christiangramia forsetii (strain DSM 17595 / CGMCC 1.15422 / KT0803) (Gramella forsetii)).